A 130-amino-acid polypeptide reads, in one-letter code: Small ribosomal subunit protein uS9 (130 aa).

The tract at residues 105–130 (TRDARMKERKKPGLKKARKASQFSKR) is disordered. Basic residues predominate over residues 111 to 130 (KERKKPGLKKARKASQFSKR).

Belongs to the universal ribosomal protein uS9 family.

In Lactiplantibacillus plantarum (strain ATCC BAA-793 / NCIMB 8826 / WCFS1) (Lactobacillus plantarum), this protein is Small ribosomal subunit protein uS9.